Consider the following 326-residue polypeptide: Nucleoporin Nup37 (326 aa).

4 WD repeats span residues 70–117, 122–162, 164–203, and 294–325; these read HHGV…KNEY, GHSD…TAHF, LHSP…AILS, and GSVA…WVTE.

In terms of assembly, component of the Nup107-160 subcomplex of the nuclear pore complex (NPC). The Nup107-160 subcomplex includes NUP160, NUP133, NUP107, NUP98, NUP85, NUP43, NUP37, SEH1 and SEC13.

It localises to the chromosome. Its subcellular location is the centromere. The protein resides in the kinetochore. The protein localises to the nucleus. It is found in the nuclear pore complex. Its function is as follows. Component of the Nup107-160 subcomplex of the nuclear pore complex (NPC). The Nup107-160 subcomplex is required for the assembly of a functional NPC. The Nup107-160 subcomplex is also required for normal kinetochore microtubule attachment, mitotic progression and chromosome segregation. The chain is Nucleoporin Nup37 (Nup37) from Mus musculus (Mouse).